The following is a 545-amino-acid chain: MGNYYSCGASSTSSPTSPSLVDYYYCYHRYPSSCSSTSTATSSGGRMPIRSHQQRLSSPTAVLGHETPALREVYTVGRKLGQGQFGTTYLCTQVSTGAEYACKSIAKRKLLSPEDVEDVRREIQIMHHLAGHGSVVTIQGAYEDNLYVHIVMELCEGGELFDRIVERGYFSERKAAEITRVIVGVVEACHSLGVMHRDLKPENFLLKESSSSSSLKAIDFGLSVFFKPGQVFSDVVGSPYYVAPEVLCKHYGPEADVWTAGVIVYILLSGVPPFWAETQQGIFDAVLRGSLDFDSDPWPTISDSAKDLIRRMLRSPPRERLTAHQVLCHPWVCDDGVAPDRPLAPAVLSRLKQFSAMNRLKKMALRVIARNLSEEELAGLKEMFKAMDTDASGAITFDELKEGLRRYGSNLREAEIRDLMDAADVDKSGTIDYDEFIAATVHLNKLEREEHLLAAFAYFDRDGSGYITVDELEHACRDHNMADVGIDDIIREVDQDNDGRIDYGEFVAMMKKGAIDIIGNGRLTIGRPTTATSDDPSPTISSSSR.

Glycine 2 is lipidated: N-myristoyl glycine. Over residues 34–43 the composition is skewed to low complexity; sequence CSSTSTATSS. The disordered stretch occupies residues 34–58; it reads CSSTSTATSSGGRMPIRSHQQRLSS. Residues 74-332 enclose the Protein kinase domain; sequence YTVGRKLGQG…AHQVLCHPWV (259 aa). Residues 80–88 and lysine 103 contribute to the ATP site; that span reads LGQGQFGTT. The Proton acceptor role is filled by aspartate 198. Positions 338–368 are autoinhibitory domain; sequence APDRPLAPAVLSRLKQFSAMNRLKKMALRVI. EF-hand domains follow at residues 375 to 410, 411 to 446, 447 to 482, and 486 to 516; these read EELA…YGSN, LREA…LNKL, EREE…HNMA, and IDDI…GAID. 19 residues coordinate Ca(2+): aspartate 388, aspartate 390, serine 392, glutamate 399, aspartate 424, aspartate 426, serine 428, threonine 430, glutamate 435, aspartate 460, aspartate 462, serine 464, tyrosine 466, glutamate 471, aspartate 494, aspartate 496, aspartate 498, arginine 500, and glutamate 505. The disordered stretch occupies residues 526–545; that stretch reads GRPTTATSDDPSPTISSSSR. A compositionally biased stretch (low complexity) spans 528-545; that stretch reads PTTATSDDPSPTISSSSR.

It belongs to the protein kinase superfamily. Ser/Thr protein kinase family. CDPK subfamily.

It localises to the membrane. It carries out the reaction L-seryl-[protein] + ATP = O-phospho-L-seryl-[protein] + ADP + H(+). The enzyme catalyses L-threonyl-[protein] + ATP = O-phospho-L-threonyl-[protein] + ADP + H(+). Its activity is regulated as follows. Activated by calcium. Autophosphorylation may play an important role in the regulation of the kinase activity. Its function is as follows. May play a role in signal transduction pathways that involve calcium as a second messenger. This chain is Calcium-dependent protein kinase 6, found in Oryza sativa subsp. japonica (Rice).